Reading from the N-terminus, the 431-residue chain is Gamma-glutamyl phosphate reductase (431 aa).

The protein belongs to the gamma-glutamyl phosphate reductase family.

The protein localises to the cytoplasm. The catalysed reaction is L-glutamate 5-semialdehyde + phosphate + NADP(+) = L-glutamyl 5-phosphate + NADPH + H(+). It functions in the pathway amino-acid biosynthesis; L-proline biosynthesis; L-glutamate 5-semialdehyde from L-glutamate: step 2/2. Its function is as follows. Catalyzes the NADPH-dependent reduction of L-glutamate 5-phosphate into L-glutamate 5-semialdehyde and phosphate. The product spontaneously undergoes cyclization to form 1-pyrroline-5-carboxylate. In Methylobacterium sp. (strain 4-46), this protein is Gamma-glutamyl phosphate reductase.